We begin with the raw amino-acid sequence, 126 residues long: Large-conductance mechanosensitive channel (126 aa).

Transmembrane regions (helical) follow at residues F8–T28 and I70–I90.

The protein belongs to the MscL family. In terms of assembly, homopentamer.

It localises to the cell membrane. Channel that opens in response to stretch forces in the membrane lipid bilayer. May participate in the regulation of osmotic pressure changes within the cell. This is Large-conductance mechanosensitive channel from Exiguobacterium sp. (strain ATCC BAA-1283 / AT1b).